The chain runs to 426 residues: S-adenosylmethionine synthase (426 aa).

ATP is bound at residue histidine 22. Residue aspartate 24 participates in Mg(2+) binding. A K(+)-binding site is contributed by glutamate 50. Residues glutamate 63 and glutamine 106 each coordinate L-methionine. The segment at 106 to 116 (QSPDISQGVTA) is flexible loop. ATP is bound by residues 181 to 183 (DGK), 257 to 258 (KF), aspartate 266, 272 to 273 (RK), alanine 289, and lysine 293. Residue aspartate 266 coordinates L-methionine. Lysine 297 contacts L-methionine.

It belongs to the AdoMet synthase family. In terms of assembly, homotetramer; dimer of dimers. Mg(2+) serves as cofactor. K(+) is required as a cofactor.

The protein localises to the cytoplasm. It catalyses the reaction L-methionine + ATP + H2O = S-adenosyl-L-methionine + phosphate + diphosphate. It functions in the pathway amino-acid biosynthesis; S-adenosyl-L-methionine biosynthesis; S-adenosyl-L-methionine from L-methionine: step 1/1. Catalyzes the formation of S-adenosylmethionine (AdoMet) from methionine and ATP. The overall synthetic reaction is composed of two sequential steps, AdoMet formation and the subsequent tripolyphosphate hydrolysis which occurs prior to release of AdoMet from the enzyme. The protein is S-adenosylmethionine synthase of Synechocystis sp. (strain ATCC 27184 / PCC 6803 / Kazusa).